Reading from the N-terminus, the 508-residue chain is Zinc finger CCCH-type with G patch domain-containing protein (508 aa).

The segment at 154–177 (PCNYYLEGECRFDETRCRYSHGAL) adopts a C3H1-type zinc-finger fold. The segment at 253–279 (DDELSSDSEETNETDGSDAANESDMDD) is disordered. In terms of domain architecture, G-patch spans 309 to 355 (TRGIGSKLMASMGYIHGTGLGSDGRGIVTPVSAQILPQGRSLDACME). A compositionally biased stretch (polar residues) spans 486–495 (QAQESSLSKE). The tract at residues 486 to 508 (QAQESSLSKEQQTRKSKNKMFEF) is disordered. A compositionally biased stretch (basic residues) spans 499–508 (RKSKNKMFEF).

Its subcellular location is the nucleus. Its function is as follows. Transcription repressor. The chain is Zinc finger CCCH-type with G patch domain-containing protein from Drosophila virilis (Fruit fly).